A 200-amino-acid chain; its full sequence is Large ribosomal subunit protein uL4 (200 aa).

The tract at residues 43–71 (RAQKTRAEVSGSGKKPWRQKGTGRARSGD) is disordered.

It belongs to the universal ribosomal protein uL4 family. Part of the 50S ribosomal subunit.

Functionally, one of the primary rRNA binding proteins, this protein initially binds near the 5'-end of the 23S rRNA. It is important during the early stages of 50S assembly. It makes multiple contacts with different domains of the 23S rRNA in the assembled 50S subunit and ribosome. Forms part of the polypeptide exit tunnel. This chain is Large ribosomal subunit protein uL4, found in Actinobacillus pleuropneumoniae serotype 5b (strain L20).